The chain runs to 179 residues: Large ribosomal subunit protein uL6 (179 aa).

The protein belongs to the universal ribosomal protein uL6 family. Part of the 50S ribosomal subunit.

In terms of biological role, this protein binds to the 23S rRNA, and is important in its secondary structure. It is located near the subunit interface in the base of the L7/L12 stalk, and near the tRNA binding site of the peptidyltransferase center. The sequence is that of Large ribosomal subunit protein uL6 from Synechocystis sp. (strain ATCC 27184 / PCC 6803 / Kazusa).